A 71-amino-acid chain; its full sequence is Long neurotoxin Tx-NM3-1 (71 aa).

5 disulfides stabilise this stretch: C3/C20, C14/C41, C26/C30, C45/C56, and C57/C62.

Expressed by the venom gland.

It localises to the secreted. In terms of biological role, binds with high affinity to muscular (alpha-1-beta-1-gamma-delta/CHRNA1-CHRNB1-CHRNG-CHRND) and neuronal (alpha-7/CHRNA7) nicotinic acetylcholine receptor (nAChR) and inhibits acetylcholine from binding to the receptor, thereby impairing neuromuscular and neuronal transmission. Ranges of nAChR inhibition are in nanomolar (competitive binding with alpha-bungarotoxin gives Ki=1.66 nM on muscle nAChR and Ki=4.84 nM on alpha-7). Also shows moderate inhibition on GABA(A) alpha-1-beta-3-gamma-2 receptor (GABRA1-GABRB3-GABRG2) (IC(50)=0.68 uM), and a lower inhibition on alpha-1-beta-2-gamma-2 (GABRA1-GABRB2-GABRG2) and alpha-3-beta-2-gamma-2 (GABRA3-GABRB2-GABRG2). This is Long neurotoxin Tx-NM3-1 from Naja melanoleuca (Forest cobra).